The primary structure comprises 310 residues: Transcription factor RAX3 (310 aa).

2 HTH myb-type domains span residues 9-62 and 63-117; these read KANV…LNYL and RPNI…KKKL. 2 consecutive DNA-binding regions (H-T-H motif) follow at residues 38–62 and 90–113; these read WIAL…LNYL and WSII…NTRL.

In terms of tissue distribution, ubiquitous.

Its subcellular location is the nucleus. Transcription activator. Positively regulates axillary meristems (AMs) formation and development, especially during inflorescence. The polypeptide is Transcription factor RAX3 (RAX3) (Arabidopsis thaliana (Mouse-ear cress)).